The primary structure comprises 207 residues: ATP synthase subunit b (207 aa).

A signal peptide spans 1 to 27 (MKLRATFVFKTTLVALSFALFALFLVS). Residue Cys-28 is the site of N-palmitoyl cysteine attachment. A lipid anchor (S-diacylglycerol cysteine) is attached at Cys-28. The chain crosses the membrane as a helical span at residues 49-69 (WVFLAHLLAFVILLFLLLFLF).

It belongs to the ATPase B chain family. In terms of assembly, F-type ATPases have 2 components, F(1) - the catalytic core - and F(0) - the membrane proton channel. F(1) has five subunits: alpha(3), beta(3), gamma(1), delta(1), epsilon(1). F(0) has three main subunits: a(1), b(2) and c(10-14). The alpha and beta chains form an alternating ring which encloses part of the gamma chain. F(1) is attached to F(0) by a central stalk formed by the gamma and epsilon chains, while a peripheral stalk is formed by the delta and b chains.

It is found in the cell membrane. Its function is as follows. F(1)F(0) ATP synthase produces ATP from ADP in the presence of a proton or sodium gradient. F-type ATPases consist of two structural domains, F(1) containing the extramembraneous catalytic core and F(0) containing the membrane proton channel, linked together by a central stalk and a peripheral stalk. During catalysis, ATP synthesis in the catalytic domain of F(1) is coupled via a rotary mechanism of the central stalk subunits to proton translocation. Component of the F(0) channel, it forms part of the peripheral stalk, linking F(1) to F(0). This Mycoplasma pneumoniae (strain ATCC 29342 / M129 / Subtype 1) (Mycoplasmoides pneumoniae) protein is ATP synthase subunit b.